Reading from the N-terminus, the 389-residue chain is MAQSEYLFTSESVSEGHPDKVCDRISDAIVDAFLAEDPHSRVALETMATTNFVVLAGEVRGPDSLTHDRLKEIAREAIKDIGYEQRGFHWKDAEIVSHVHSQSADIAVGVDAAGNKDEGAGDQGIMFGYACTETEELMPAPIALSHAILKSLAEFRHGGDTSFGPDSKSQVTLRYVDGKPVGAASVVVSTQHAGNLSQDEVRELVRPHVLKVLPEGWMCPEEEFYVNPTGRFVIGGPDGDCGLTGRKIIVDTYGGAAPHGGGAFSGKDPTKVDRSAAYAARYLAKNVVAAGLAEKCVIQVSYAIGVSKPLSVYVNTQGTGQVDEQRLAVVLQQLMDLSPRGIRQHLQLSRPIYARTAAYGHFGRKPEKDGGFSWERTDLVAGLKTAFGA.

H17 contacts ATP. Residue D19 participates in Mg(2+) binding. E45 is a binding site for K(+). The L-methionine site is built by E58 and Q102. The flexible loop stretch occupies residues 102–112; that stretch reads QSADIAVGVDA. ATP contacts are provided by residues 166–168, 231–232, D240, 246–247, A263, and K267; these read DSK, RF, and RK. D240 serves as a coordination point for L-methionine. K271 serves as a coordination point for L-methionine.

This sequence belongs to the AdoMet synthase family. In terms of assembly, homotetramer; dimer of dimers. Mg(2+) serves as cofactor. Requires K(+) as cofactor.

It is found in the cytoplasm. It catalyses the reaction L-methionine + ATP + H2O = S-adenosyl-L-methionine + phosphate + diphosphate. It functions in the pathway amino-acid biosynthesis; S-adenosyl-L-methionine biosynthesis; S-adenosyl-L-methionine from L-methionine: step 1/1. Functionally, catalyzes the formation of S-adenosylmethionine (AdoMet) from methionine and ATP. The overall synthetic reaction is composed of two sequential steps, AdoMet formation and the subsequent tripolyphosphate hydrolysis which occurs prior to release of AdoMet from the enzyme. This Rhodospirillum rubrum (strain ATCC 11170 / ATH 1.1.1 / DSM 467 / LMG 4362 / NCIMB 8255 / S1) protein is S-adenosylmethionine synthase 2.